The sequence spans 88 residues: Beta-defensin 115 (88 aa).

Positions 1 to 27 (MLPDHFSPLSGDIKLSVLALVVLVVLA) are cleaved as a signal peptide. Disulfide bonds link Cys38/Cys65, Cys45/Cys59, and Cys49/Cys66.

This sequence belongs to the beta-defensin family.

The protein localises to the secreted. Its function is as follows. Has antibacterial activity. This Homo sapiens (Human) protein is Beta-defensin 115 (DEFB115).